The chain runs to 617 residues: Proline--tRNA ligase (617 aa).

Belongs to the class-II aminoacyl-tRNA synthetase family. ProS type 1 subfamily. Homodimer.

Its subcellular location is the cytoplasm. The catalysed reaction is tRNA(Pro) + L-proline + ATP = L-prolyl-tRNA(Pro) + AMP + diphosphate. In terms of biological role, catalyzes the attachment of proline to tRNA(Pro) in a two-step reaction: proline is first activated by ATP to form Pro-AMP and then transferred to the acceptor end of tRNA(Pro). As ProRS can inadvertently accommodate and process non-cognate amino acids such as alanine and cysteine, to avoid such errors it has two additional distinct editing activities against alanine. One activity is designated as 'pretransfer' editing and involves the tRNA(Pro)-independent hydrolysis of activated Ala-AMP. The other activity is designated 'posttransfer' editing and involves deacylation of mischarged Ala-tRNA(Pro). The misacylated Cys-tRNA(Pro) is not edited by ProRS. The protein is Proline--tRNA ligase of Streptococcus pneumoniae (strain CGSP14).